The sequence spans 250 residues: Proteasome subunit alpha type-8 (250 aa).

It belongs to the peptidase T1A family. As to quaternary structure, component of the outer alpha-ring of the 20S proteasome core which is composed of 28 subunits that are arranged in four stacked rings, resulting in a barrel-shaped structure. The catalytic chamber with the active sites is on the inside of the barrel. Interacts with canonical subunits of the spermatoproteasome, including proteasome activators PSME4 (also called PA200) and PSME3 (also called PA28-gamma). Interacts with proteasome-interacting proteins chaperones including CCT6B and CCT2, ubiquitin ligases (TRIP12, NEDD4, TRIM36 and RAD18), and ubiquitin specific proteases such as USP9X, USP34, USP5 and USP47. Interacts with meiotic proteins cyclin dependent kinase CDK1 and the ATPase TRIP13 as well as proteins of the synaptonemal complex SIX6OS1 and SYCE3.

The protein localises to the nucleus. Its function is as follows. Component of the spermatoproteasome, a proteasome specifically found in testis that promotes acetylation-dependent degradation of histones, thereby participating actively to the exchange of histones during spermatogenesis. The proteasome is a protein complex that degrades unneeded or damaged proteins by proteolysis, a chemical reaction that breaks peptide bonds. Required for 20S core proteasome assembly, essential for the degradation of meiotic proteins RAD51 and RPA1 at late prophase I and the progression of meiosis I during spermatogenesis. Localizes to the synaptonemal complex, a 'zipper'-like structure that holds homologous chromosome pairs in synapsis during meiotic prophase I. In Mus musculus (Mouse), this protein is Proteasome subunit alpha type-8.